We begin with the raw amino-acid sequence, 551 residues long: Serendipity locus protein alpha (551 aa).

Its subcellular location is the cytoplasm. It localises to the cell membrane. Required for the cellularization of the syncytial blastoderm embryo. Involved in the localization of the actin filaments just prior to and during plasma membrane invagination. Sry-alpha together with nullo and bnk may provide auxiliary functions, by acting both to stabilize a large and dynamic microfilament structure and regulate its functions. The protein is Serendipity locus protein alpha (Sry-alpha) of Drosophila pseudoobscura pseudoobscura (Fruit fly).